Here is a 234-residue protein sequence, read N- to C-terminus: MAKLDAHDIIRTIAESKKKTPVKVYVKGDLNSLDVPSNVETYFTDNVGVMFGDWADVEPILKDSSVESYHLENDGRNTGVAMVDKKKFNARIEPGAIIRDQVEIGDNAVVMMGAVINIGAEIGEGSMIDMGAVLGGRAIVGKNCHIGAGTVLAGVVEPPSAQPVVIEDDVLIGANAVVLEGVRVGKGAVVGAGAVVTKDVEPYTVVMGMPAKKVKDVSQVDDSKTEIVDDLRKL.

The protein belongs to the transferase hexapeptide repeat family. DapH subfamily.

The enzyme catalyses (S)-2,3,4,5-tetrahydrodipicolinate + acetyl-CoA + H2O = L-2-acetamido-6-oxoheptanedioate + CoA. The protein operates within amino-acid biosynthesis; L-lysine biosynthesis via DAP pathway; LL-2,6-diaminopimelate from (S)-tetrahydrodipicolinate (acetylase route): step 1/3. Catalyzes the transfer of an acetyl group from acetyl-CoA to tetrahydrodipicolinate. In Ligilactobacillus salivarius (strain UCC118) (Lactobacillus salivarius), this protein is 2,3,4,5-tetrahydropyridine-2,6-dicarboxylate N-acetyltransferase.